Here is a 96-residue protein sequence, read N- to C-terminus: Putative septation protein SpoVG (96 aa).

The protein belongs to the SpoVG family.

Its function is as follows. Could be involved in septation. This Oceanobacillus iheyensis (strain DSM 14371 / CIP 107618 / JCM 11309 / KCTC 3954 / HTE831) protein is Putative septation protein SpoVG.